The primary structure comprises 257 residues: Phosphonates import ATP-binding protein PhnC 1 (257 aa).

Residues 2-246 (IELKNVSKVY…VFKDIYGRPL (245 aa)) form the ABC transporter domain. ATP is bound at residue 35–42 (GLSGAGKS).

Belongs to the ABC transporter superfamily. Phosphonates importer (TC 3.A.1.9.1) family. In terms of assembly, the complex is composed of two ATP-binding proteins (PhnC), two transmembrane proteins (PhnE) and a solute-binding protein (PhnD).

The protein resides in the cell membrane. It carries out the reaction phosphonate(out) + ATP + H2O = phosphonate(in) + ADP + phosphate + H(+). Functionally, part of the ABC transporter complex PhnCDE involved in phosphonates import. Responsible for energy coupling to the transport system. This Halalkalibacterium halodurans (strain ATCC BAA-125 / DSM 18197 / FERM 7344 / JCM 9153 / C-125) (Bacillus halodurans) protein is Phosphonates import ATP-binding protein PhnC 1.